Consider the following 74-residue polypeptide: uncharacterized protein (74 aa).

This is an uncharacterized protein from Archaeoglobus fulgidus (strain ATCC 49558 / DSM 4304 / JCM 9628 / NBRC 100126 / VC-16).